Consider the following 371-residue polypeptide: Probable tRNA sulfurtransferase (371 aa).

The 103-residue stretch at 54 to 156 folds into the THUMP domain; the sequence is NANIEALSEV…NEMTYFYHKV (103 aa). Residues 174-175, 199-200, Lys-254, Gly-276, and Gln-285 contribute to the ATP site; these read LF and NF.

Belongs to the ThiI family.

The protein resides in the cytoplasm. It carries out the reaction [ThiI sulfur-carrier protein]-S-sulfanyl-L-cysteine + a uridine in tRNA + 2 reduced [2Fe-2S]-[ferredoxin] + ATP + H(+) = [ThiI sulfur-carrier protein]-L-cysteine + a 4-thiouridine in tRNA + 2 oxidized [2Fe-2S]-[ferredoxin] + AMP + diphosphate. The enzyme catalyses [ThiS sulfur-carrier protein]-C-terminal Gly-Gly-AMP + S-sulfanyl-L-cysteinyl-[cysteine desulfurase] + AH2 = [ThiS sulfur-carrier protein]-C-terminal-Gly-aminoethanethioate + L-cysteinyl-[cysteine desulfurase] + A + AMP + 2 H(+). It participates in cofactor biosynthesis; thiamine diphosphate biosynthesis. Its function is as follows. Catalyzes the ATP-dependent transfer of a sulfur to tRNA to produce 4-thiouridine in position 8 of tRNAs, which functions as a near-UV photosensor. Also catalyzes the transfer of sulfur to the sulfur carrier protein ThiS, forming ThiS-thiocarboxylate. This is a step in the synthesis of thiazole, in the thiamine biosynthesis pathway. The sulfur is donated as persulfide by IscS. The polypeptide is Probable tRNA sulfurtransferase (Saccharolobus solfataricus (strain ATCC 35092 / DSM 1617 / JCM 11322 / P2) (Sulfolobus solfataricus)).